The chain runs to 1250 residues: MRIIFLRKEYLSLLPSMIASLFSANGVAAVTDSCQGYDVKASCQASRQSLSGITQDWSIADGQWLVFSDMTNNASGGAVFLQQGAEFSLLPENETGMTLFANNTVTGEYNNGGAIFAKENSTLNLTDVIFSGNVAGGYGGAIYSSGTNDTGAVDLRVTNAMFRNNIANDGKGGAIYTINNDVYLSDVIFDNNQAYTSTSYSDGDGGAIDVTDNNSDSKHPSGYTIVNNTAFTNNTAEGYGGAIYTNSVTAPYLIDISVDDSYSQNGGVLVDENNSAAGYGDGPSSAAGGFMYLGLSEVTFDIADGKTLVIGNTENDGAVDSIAGTGLITKTGSGDLVLNADNNDFTGEMQIENGEVTLGRSNSLMNVGDTHCQDDPQDCYGLTIGSIDQYQNQAELNVGSTQQTFVHALTGFQNGTLNIDAGGNVTVNQGSFAGIIEGAGQLTIAQNGSYVLAGAQSMALTGDIVVDDGAVLSLEGDAADLTALQDDPQSIVLNGGVLDLSDFSTWQSGTSYNDGLEVSGSSGTVIGSQDVVDLAGGDNLHIGGDGKDGVYVVVDASDGQVSLANNNSYLGTTQIASGTLMVSDNSQLGDTHYNRQVIFTDKQQESVMEITSDVDTRSDAAGHGRDIEMRADGEVAVDAGVDTQWGALMADSSGQHQDEGSTLTKTGAGTLELTASGTTQSAVRVEEGTLKGDVADILPYASSLWVGDGATFVTGADQDIQSIDAISSGTIDISDGTVLRLTGQDTSVALNASLFNGDGTLVNATDGVTLTGELNTNLETDSLTYLSNVTVNGNLTNTSGAVSLQNGVAGDTLTVNGDYTGGGTLLLDSELNGDDSVSDQLVMNGNTAGNTTVVVNSITGIGEPTSTGIKVVDFAADPTQFQNNAQFSLAGSGYVNMGAYDYTLVEDNNDWYLRSQEVTPPSPPDPDPTPDPDPTPDPDPTPDPEPTPAYQPVLNAKVGGYLNNLRAANQAFMMERRDHAGGDGQTLNLRVIGGDYHYTAAGQLAQHEDTSTVQLSGDLFSGRWGTDGEWMLGIVGGYSDNQGDSRSNMTGTRADNQNHGYAVGLTSSWFQHGNQKQGAWLDSWLQYAWFSNDVSEQEDGTDHYHSSGIIASLEAGYQWLPGRGVVIEPQAQVIYQGVQQDDFTAANRARVSQSQGDDIQTRLGLHSEWRTAVHVIPTLDLNYYHDPHSTEIEEDGSTISDDAVKQRGEIKVGVTGNISQRVSLRGSVAWQKGSDDFAQTAGFLSMTVKW.

The N-terminal stretch at 1 to 28 is a signal peptide; the sequence is MRIIFLRKEYLSLLPSMIASLFSANGVA. The interval 914-951 is disordered; it reads RSQEVTPPSPPDPDPTPDPDPTPDPDPTPDPEPTPAYQ. Repeat unit 1 spans residues 919 to 920; sequence TP. Positions 919 to 948 are 15 X 2 AA approximate tandem repeats of [DTPE]-P; that stretch reads TPPSPPDPDPTPDPDPTPDPDPTPDPEPTP. A 2; approximate repeat occupies 921-922; it reads PS. Repeat 3 spans residues 923-924; the sequence is PP. The stretch at 925–926 is one 4; approximate repeat; the sequence is DP. A run of 11 repeats spans residues 927–928, 929–930, 931–932, 933–934, 935–936, 937–938, 939–940, 941–942, 943–944, 945–946, and 947–948. Acidic residues predominate over residues 928–942; it reads PTPDPDPTPDPDPTP. The Autotransporter domain maps to 980–1250; sequence AGGDGQTLNL…AGFLSMTVKW (271 aa).

Post-translationally, an approximately 170 kDa protein is detected in the outer membrane, while a C-terminal 55 kDa fragment is detected in whole cells. The full-length putative autotransporter may be cleaved to release the mature protein from the outer membrane; Pefabloc SC, a Ser-Thr protease inhibitor prevents the appearance of the 55 kDa C--terminal fragment.

It is found in the periplasm. Its subcellular location is the secreted. The protein localises to the cell surface. The protein resides in the cell outer membrane. Probably an autotransporter. Upon overexpression shows increased adherence to polyvinyl chloride (PVC) plates, increased mature biofilm formation. This chain is Probable autotransporter YfaL (yfaL), found in Escherichia coli (strain K12).